The primary structure comprises 361 residues: Probable dual-specificity RNA methyltransferase RlmN (361 aa).

The Proton acceptor role is filled by Glu-104. The Radical SAM core domain maps to 110-343; that stretch reads HEYGNSVCVT…VTIRREQGHD (234 aa). A disulfide bridge links Cys-117 with Cys-348. Residues Cys-124, Cys-128, and Cys-131 each contribute to the [4Fe-4S] cluster site. S-adenosyl-L-methionine is bound by residues 174-175, Ser-206, 229-231, and Asn-305; these read GE and SLH. Cys-348 (S-methylcysteine intermediate) is an active-site residue.

Belongs to the radical SAM superfamily. RlmN family. Requires [4Fe-4S] cluster as cofactor.

The protein resides in the cytoplasm. The enzyme catalyses adenosine(2503) in 23S rRNA + 2 reduced [2Fe-2S]-[ferredoxin] + 2 S-adenosyl-L-methionine = 2-methyladenosine(2503) in 23S rRNA + 5'-deoxyadenosine + L-methionine + 2 oxidized [2Fe-2S]-[ferredoxin] + S-adenosyl-L-homocysteine. The catalysed reaction is adenosine(37) in tRNA + 2 reduced [2Fe-2S]-[ferredoxin] + 2 S-adenosyl-L-methionine = 2-methyladenosine(37) in tRNA + 5'-deoxyadenosine + L-methionine + 2 oxidized [2Fe-2S]-[ferredoxin] + S-adenosyl-L-homocysteine. Functionally, specifically methylates position 2 of adenine 2503 in 23S rRNA and position 2 of adenine 37 in tRNAs. This is Probable dual-specificity RNA methyltransferase RlmN from Bacillus licheniformis (strain ATCC 14580 / DSM 13 / JCM 2505 / CCUG 7422 / NBRC 12200 / NCIMB 9375 / NCTC 10341 / NRRL NRS-1264 / Gibson 46).